A 349-amino-acid polypeptide reads, in one-letter code: Putative ABC transporter permease protein MJ0087 (349 aa).

9 helical membrane-spanning segments follow: residues 15–35 (IIFG…ALCV), 69–89 (IFAA…MQCI), 100–120 (MGIS…FGFG), 135–155 (MITI…LLLA), 166–186 (ILAG…IQYF), 206–226 (AIWT…IYFM), 254–274 (LIGM…LGII), 295–315 (FLIP…DTFA), and 318–338 (IIAP…APMF).

The protein belongs to the binding-protein-dependent transport system permease family. FecCD subfamily.

It localises to the cell membrane. Probably part of a binding-protein-dependent transport system. Probably responsible for the translocation of the substrate across the membrane. The protein is Putative ABC transporter permease protein MJ0087 of Methanocaldococcus jannaschii (strain ATCC 43067 / DSM 2661 / JAL-1 / JCM 10045 / NBRC 100440) (Methanococcus jannaschii).